Reading from the N-terminus, the 841-residue chain is MKIPLRFLLISLVPTLSMSNLLGAATTEELSASNSFDGTTSTTSFSSKTSSATDGTNYVFKDSVVIENVPKTGETQSTSCFKNDAAAGDLNFLGGGFSFTFSNIDATTASGAAIGSEAANKTVTLSGFSALSFLKSPASTVTNGLGAINVKGNLSLLDNDKVLIQDNFSTGDGGAINCAGSLKIANNKSLSFIGNSSSTRGGAIHTKNLTLSSGGETLFQGNTAPTAAGKGGAIAIADSGTLSISGDSGDIIFEGNTIGATGTVSHSAIDLGTSAKITALRAAQGHTIYFYDPITVTGSTSVADALNINSPDTGDNKEYTGTIVFSGEKLTEAEAKDEKNRTSKLLQNVAFKNGTVVLKGDVVLSANGFSQDANSKLIMDLGTSLVANTESIELTNLEINIDSLRNGKKIKLSAATAQKDIRIDRPVVLAISDESFYQNGFLNEDHSYDGILELDAGKDIVISADSRSIDAVQSPYGYQGKWTINWSTDDKKATVSWAKQSFNPTAEQEAPLVPNLLWGSFIDVRSFQNFIELGTEGAPYEKRFWVAGISNVLHRSGRENQRKFRHVSGGAVVGASTRMPGGDTLSLGFAQLFARDKDYFMNTNFAKTYAGSLRLQHDASLYSVVSILLGEGGLREILLPYVSKTLPCSFYGQLSYGHTDHRMKTESLPPPPPTLSTDHTSWGGYVWAGELGTRVAVENTSGRGFFQEYTPFVKVQAVYARQDSFVELGAISRDFSDSHLYNLAIPLGIKLEKRFAEQYYHVVAMYSPDVCRSNPKCTTTLLSNQGSWKTKGSNLARQAGIVQASGFRSLGAAAELFGNFGFEWRGSSRSYNVDAGSKIKF.

A signal peptide spans 1-24 (MKIPLRFLLISLVPTLSMSNLLGA). In terms of domain architecture, Autotransporter spans 537 to 841 (GAPYEKRFWV…NVDAGSKIKF (305 aa)).

This sequence belongs to the PMP outer membrane protein family.

Its subcellular location is the secreted. It localises to the cell wall. The protein resides in the cell outer membrane. The polypeptide is Probable outer membrane protein pmp2 (pmp2) (Chlamydia pneumoniae (Chlamydophila pneumoniae)).